The primary structure comprises 412 residues: UPF0761 membrane protein lpg0643 (412 aa).

6 consecutive transmembrane segments (helical) span residues 36–56 (ALAFTSLLAVVPLMSVGLAIF), 99–119 (LSIWGIVFLIFTALLVMFTIE), 137–157 (AFLLYWAIISLAPVLLGLSLA), 177–197 (ILHYSPFFLSLIGFTFLYVVV), 210–230 (GGLVAAILFESAKHAFAYYLI), and 241–261 (AFATVPIFFIWVYWVWIITLL).

It belongs to the UPF0761 family.

Its subcellular location is the cell inner membrane. This chain is UPF0761 membrane protein lpg0643, found in Legionella pneumophila subsp. pneumophila (strain Philadelphia 1 / ATCC 33152 / DSM 7513).